Here is a 1014-residue protein sequence, read N- to C-terminus: Probable LRR receptor-like serine/threonine-protein kinase At1g07650 (1014 aa).

An N-terminal signal peptide occupies residues 1 to 23; the sequence is MIYLHRIYFIIVLFTLIFHGRLG. Residues 24 to 619 lie on the Extracellular side of the membrane; it reads FSDNNKLHEA…KPPVYYDTKD (596 aa). Residues Asn-76, Asn-87, and Asn-101 are each glycosylated (N-linked (GlcNAc...) asparagine). LRR repeat units follow at residues 89–112, 113–137, 139–160, 161–184, 186–207, 208–234, 256–279, 280–304, 305–327, 329–352, and 354–376; these read SCHVIRIALKSQNLTGIVPPEFSK, LRHLKVLDLSRNSLTGSIPKEWASM, LEDLSFMGNRLSGPFPKVLTRL, TMLRNLSLEGNQFSGPIPPDIGQL, HLEKLHLPSNAFTGPLTEKLGL, LKNLTDMRISDNNFTGPIPDFISNWTR, LTSLTDLRISDLGGKPSSFPPLKN, LESIKTLILRKCKIIGPIPKYIGDL, KKLKTLDLSFNLLSGEIPSSFEN, KKADFIYLTGNKLTGGVPNYFVER, and KNVDVSFNNFTDESSIPSHDCNR. Asn-165 carries N-linked (GlcNAc...) asparagine glycosylation. Asn-210, Asn-220, and Asn-231 each carry an N-linked (GlcNAc...) asparagine glycan. Asn-362, Asn-389, Asn-474, Asn-481, and Asn-511 each carry an N-linked (GlcNAc...) asparagine glycan. The LRR 12 repeat unit spans residues 516–539; that stretch reads LHFAEIIFTDDNTLYSLGKRLFDI. A glycan (N-linked (GlcNAc...) asparagine) is linked at Asn-570. A helical transmembrane segment spans residues 620 to 640; the sequence is IILKVGVPVAAATLLLFIIVG. The Cytoplasmic portion of the chain corresponds to 641–1014; that stretch reads VFWKKRRDKN…DAEEKTGLLD (374 aa). Thr-667 is subject to Phosphothreonine. The region spanning 678–960 is the Protein kinase domain; that stretch reads FDVTRKIGEG…EGKTAMQELL (283 aa). Residues 684-692 and Lys-706 contribute to the ATP site; that span reads IGEGGFGSV. The residue at position 751 (Tyr-751) is a Phosphotyrosine. Catalysis depends on Asp-805, which acts as the Proton acceptor. Residues Ser-809 and Ser-838 each carry the phosphoserine modification. Phosphothreonine is present on residues Thr-839 and Thr-844. Position 852 is a phosphotyrosine (Tyr-852). A Phosphoserine modification is found at Ser-989. Polar residues predominate over residues 989-1002; the sequence is SFSTSGPRTASANS. The disordered stretch occupies residues 989–1014; it reads SFSTSGPRTASANSLVDAEEKTGLLD.

It belongs to the protein kinase superfamily. Ser/Thr protein kinase family.

It localises to the membrane. It catalyses the reaction L-seryl-[protein] + ATP = O-phospho-L-seryl-[protein] + ADP + H(+). It carries out the reaction L-threonyl-[protein] + ATP = O-phospho-L-threonyl-[protein] + ADP + H(+). The polypeptide is Probable LRR receptor-like serine/threonine-protein kinase At1g07650 (Arabidopsis thaliana (Mouse-ear cress)).